A 309-amino-acid polypeptide reads, in one-letter code: Porphobilinogen deaminase (309 aa).

Residue cysteine 244 is modified to S-(dipyrrolylmethanemethyl)cysteine.

The protein belongs to the HMBS family. In terms of assembly, monomer. Dipyrromethane is required as a cofactor.

The catalysed reaction is 4 porphobilinogen + H2O = hydroxymethylbilane + 4 NH4(+). The protein operates within porphyrin-containing compound metabolism; protoporphyrin-IX biosynthesis; coproporphyrinogen-III from 5-aminolevulinate: step 2/4. Its function is as follows. Tetrapolymerization of the monopyrrole PBG into the hydroxymethylbilane pre-uroporphyrinogen in several discrete steps. The chain is Porphobilinogen deaminase from Rhizobium meliloti (strain 1021) (Ensifer meliloti).